The following is a 103-amino-acid chain: Large ribosomal subunit protein bL21 (103 aa).

The protein belongs to the bacterial ribosomal protein bL21 family. As to quaternary structure, part of the 50S ribosomal subunit. Contacts protein L20.

Its function is as follows. This protein binds to 23S rRNA in the presence of protein L20. The chain is Large ribosomal subunit protein bL21 from Acinetobacter baumannii (strain AB307-0294).